Consider the following 247-residue polypeptide: DNA polymerase sliding clamp (247 aa).

The protein belongs to the PCNA family. As to quaternary structure, homotrimer. The subunits circularize to form a toroid; DNA passes through its center. Replication factor C (RFC) is required to load the toroid on the DNA.

Sliding clamp subunit that acts as a moving platform for DNA processing. Responsible for tethering the catalytic subunit of DNA polymerase and other proteins to DNA during high-speed replication. The sequence is that of DNA polymerase sliding clamp from Methanospirillum hungatei JF-1 (strain ATCC 27890 / DSM 864 / NBRC 100397 / JF-1).